Here is a 391-residue protein sequence, read N- to C-terminus: 3-ketoacyl-CoA thiolase (391 aa).

Residue Cys95 is the Acyl-thioester intermediate of the active site. Catalysis depends on proton acceptor residues His347 and Cys377.

This sequence belongs to the thiolase-like superfamily. Thiolase family. As to quaternary structure, heterotetramer of two alpha chains (FadB) and two beta chains (FadA).

Its subcellular location is the cytoplasm. The catalysed reaction is an acyl-CoA + acetyl-CoA = a 3-oxoacyl-CoA + CoA. It functions in the pathway lipid metabolism; fatty acid beta-oxidation. In terms of biological role, catalyzes the final step of fatty acid oxidation in which acetyl-CoA is released and the CoA ester of a fatty acid two carbons shorter is formed. The chain is 3-ketoacyl-CoA thiolase from Marinobacter nauticus (strain ATCC 700491 / DSM 11845 / VT8) (Marinobacter aquaeolei).